Consider the following 402-residue polypeptide: 4-hydroxy-3-methylbut-2-enyl diphosphate reductase (402 aa).

Cys-66 provides a ligand contact to [4Fe-4S] cluster. His-96 provides a ligand contact to (2E)-4-hydroxy-3-methylbut-2-enyl diphosphate. His-96 lines the dimethylallyl diphosphate pocket. His-96 is an isopentenyl diphosphate binding site. A [4Fe-4S] cluster-binding site is contributed by Cys-157. His-185 lines the (2E)-4-hydroxy-3-methylbut-2-enyl diphosphate pocket. Residue His-185 coordinates dimethylallyl diphosphate. His-185 contributes to the isopentenyl diphosphate binding site. Residue Glu-187 is the Proton donor of the active site. Thr-250 contacts (2E)-4-hydroxy-3-methylbut-2-enyl diphosphate. Cys-288 contacts [4Fe-4S] cluster. (2E)-4-hydroxy-3-methylbut-2-enyl diphosphate is bound by residues Ser-317, Ser-318, Asn-319, and Ser-379. The dimethylallyl diphosphate site is built by Ser-317, Ser-318, Asn-319, and Ser-379. Isopentenyl diphosphate contacts are provided by Ser-317, Ser-318, Asn-319, and Ser-379.

It belongs to the IspH family. It depends on [4Fe-4S] cluster as a cofactor.

It carries out the reaction isopentenyl diphosphate + 2 oxidized [2Fe-2S]-[ferredoxin] + H2O = (2E)-4-hydroxy-3-methylbut-2-enyl diphosphate + 2 reduced [2Fe-2S]-[ferredoxin] + 2 H(+). The catalysed reaction is dimethylallyl diphosphate + 2 oxidized [2Fe-2S]-[ferredoxin] + H2O = (2E)-4-hydroxy-3-methylbut-2-enyl diphosphate + 2 reduced [2Fe-2S]-[ferredoxin] + 2 H(+). The protein operates within isoprenoid biosynthesis; dimethylallyl diphosphate biosynthesis; dimethylallyl diphosphate from (2E)-4-hydroxy-3-methylbutenyl diphosphate: step 1/1. It functions in the pathway isoprenoid biosynthesis; isopentenyl diphosphate biosynthesis via DXP pathway; isopentenyl diphosphate from 1-deoxy-D-xylulose 5-phosphate: step 6/6. Functionally, catalyzes the conversion of 1-hydroxy-2-methyl-2-(E)-butenyl 4-diphosphate (HMBPP) into a mixture of isopentenyl diphosphate (IPP) and dimethylallyl diphosphate (DMAPP). Acts in the terminal step of the DOXP/MEP pathway for isoprenoid precursor biosynthesis. The protein is 4-hydroxy-3-methylbut-2-enyl diphosphate reductase of Thermosynechococcus vestitus (strain NIES-2133 / IAM M-273 / BP-1).